Here is a 483-residue protein sequence, read N- to C-terminus: tRNA sulfurtransferase (483 aa).

The THUMP domain occupies Pro-62–Arg-166. Residues Leu-184 to Ile-185, Lys-266, Gly-288, and Gln-297 contribute to the ATP site. Residues Cys-345 and Cys-457 are joined by a disulfide bond. One can recognise a Rhodanese domain in the interval Leu-405–Pro-483. Cys-457 acts as the Cysteine persulfide intermediate in catalysis.

It belongs to the ThiI family.

Its subcellular location is the cytoplasm. It catalyses the reaction [ThiI sulfur-carrier protein]-S-sulfanyl-L-cysteine + a uridine in tRNA + 2 reduced [2Fe-2S]-[ferredoxin] + ATP + H(+) = [ThiI sulfur-carrier protein]-L-cysteine + a 4-thiouridine in tRNA + 2 oxidized [2Fe-2S]-[ferredoxin] + AMP + diphosphate. The catalysed reaction is [ThiS sulfur-carrier protein]-C-terminal Gly-Gly-AMP + S-sulfanyl-L-cysteinyl-[cysteine desulfurase] + AH2 = [ThiS sulfur-carrier protein]-C-terminal-Gly-aminoethanethioate + L-cysteinyl-[cysteine desulfurase] + A + AMP + 2 H(+). It functions in the pathway cofactor biosynthesis; thiamine diphosphate biosynthesis. In terms of biological role, catalyzes the ATP-dependent transfer of a sulfur to tRNA to produce 4-thiouridine in position 8 of tRNAs, which functions as a near-UV photosensor. Also catalyzes the transfer of sulfur to the sulfur carrier protein ThiS, forming ThiS-thiocarboxylate. This is a step in the synthesis of thiazole, in the thiamine biosynthesis pathway. The sulfur is donated as persulfide by IscS. In Yersinia pseudotuberculosis serotype O:1b (strain IP 31758), this protein is tRNA sulfurtransferase.